The following is a 455-amino-acid chain: 3-phosphoshikimate 1-carboxyvinyltransferase (455 aa).

Positions M1 to R23 are disordered. Residues K28, S29, and R33 each coordinate 3-phosphoshikimate. K28 is a phosphoenolpyruvate binding site. 2 residues coordinate phosphoenolpyruvate: G100 and R128. Residues S173, Q175, D326, and K353 each contribute to the 3-phosphoshikimate site. Phosphoenolpyruvate is bound at residue Q175. Residue D326 is the Proton acceptor of the active site. Phosphoenolpyruvate contacts are provided by R357 and R405.

The protein belongs to the EPSP synthase family. In terms of assembly, monomer.

The protein resides in the cytoplasm. It carries out the reaction 3-phosphoshikimate + phosphoenolpyruvate = 5-O-(1-carboxyvinyl)-3-phosphoshikimate + phosphate. The protein operates within metabolic intermediate biosynthesis; chorismate biosynthesis; chorismate from D-erythrose 4-phosphate and phosphoenolpyruvate: step 6/7. Its function is as follows. Catalyzes the transfer of the enolpyruvyl moiety of phosphoenolpyruvate (PEP) to the 5-hydroxyl of shikimate-3-phosphate (S3P) to produce enolpyruvyl shikimate-3-phosphate and inorganic phosphate. The chain is 3-phosphoshikimate 1-carboxyvinyltransferase from Rhizobium meliloti (strain 1021) (Ensifer meliloti).